Consider the following 207-residue polypeptide: Ras-related protein Rab-8B (207 aa).

Residues Ser17, Gly18, Val19, Gly20, Lys21, Thr22, Cys23, Thr35, Ser39, and Thr40 each coordinate GTP. Residue Thr22 coordinates Mg(2+). Short sequence motifs (switch) lie at residues 31 to 45 (DAFN…GIDF) and 63 to 80 (DTAG…YYRG). Mg(2+) is bound by residues Thr40 and Asp63. Gly66 lines the GTP pocket. Thr72 is subject to Phosphothreonine. The GTP site is built by Asn121, Lys122, Asp124, Ala152, and Lys153. Ser180 bears the Phosphoserine mark. Cys204 is subject to Cysteine methyl ester. The S-geranylgeranyl cysteine moiety is linked to residue Cys204. A propeptide spans 205–207 (LLL) (removed in mature form).

The protein belongs to the small GTPase superfamily. Rab family. As to quaternary structure, associated with actin, delta-catenin and alpha and beta tubulins. Interacts with OTOF. Interacts with PEX5R. Interacts with RAB3IP. Interacts with VIM. Interacts with CDH1. Interacts with MICALL2. Interacts with GDI1, GDI2, CHML and CHM; phosphorylation at Thr-72 disrupts these interactions. Interacts with MICAL1. Requires Mg(2+) as cofactor. Phosphorylation of Thr-72 in the switch II region by LRRK2 prevents the association of RAB regulatory proteins, including CHM, CHML and RAB GDP dissociation inhibitors GDI1 and GDI2.

Its subcellular location is the cell membrane. It is found in the cytoplasmic vesicle. The protein resides in the phagosome membrane. The protein localises to the endosome membrane. It catalyses the reaction GTP + H2O = GDP + phosphate + H(+). Its activity is regulated as follows. Regulated by guanine nucleotide exchange factors (GEFs) including RAB3IP/RABIN8 which promotes the exchange of bound GDP for free GTP. Regulated by GTPase activating proteins (GAPs) which increase the GTP hydrolysis activity. Inhibited by GDP dissociation inhibitors (GDIs). The small GTPases Rab are key regulators of intracellular membrane trafficking, from the formation of transport vesicles to their fusion with membranes. Rabs cycle between an inactive GDP-bound form and an active GTP-bound form that is able to recruit to membranes different sets of downstream effectors directly responsible for vesicle formation, movement, tethering and fusion. RAB8B may be involved in polarized vesicular trafficking and neurotransmitter release. May participate in cell junction dynamics in Sertoli cells. May also participate in the export of a subset of neosynthesized proteins through a Rab8-Rab10-Rab11-dependent endososomal export route. The chain is Ras-related protein Rab-8B (RAB8B) from Pongo abelii (Sumatran orangutan).